The primary structure comprises 130 residues: uncharacterized protein (130 aa).

A disordered region spans residues 23 to 130 (SHLRLLPTAN…GAHQLSSPSS (108 aa)). A compositionally biased stretch (polar residues) spans 30 to 45 (TANSPSGSNQPTNPNR).

This is an uncharacterized protein from Homo sapiens (Human).